We begin with the raw amino-acid sequence, 629 residues long: Methionine--tRNA ligase (629 aa).

The short motif at Tyr10–Ser20 is the 'HIGH' region element. Zn(2+)-binding residues include Cys125, Cys128, Cys146, and Cys149. Residues Lys297 to Ser301 carry the 'KMSKS' region motif. Lys300 is a binding site for ATP. Residues Asp529–Ser629 enclose the tRNA-binding domain.

It belongs to the class-I aminoacyl-tRNA synthetase family. MetG type 2A subfamily. In terms of assembly, homodimer. The cofactor is Zn(2+).

The protein resides in the cytoplasm. It carries out the reaction tRNA(Met) + L-methionine + ATP = L-methionyl-tRNA(Met) + AMP + diphosphate. Its function is as follows. Is required not only for elongation of protein synthesis but also for the initiation of all mRNA translation through initiator tRNA(fMet) aminoacylation. This chain is Methionine--tRNA ligase (metG), found in Thermotoga maritima (strain ATCC 43589 / DSM 3109 / JCM 10099 / NBRC 100826 / MSB8).